The chain runs to 393 residues: PxcA-like protein (393 aa).

A run of 4 helical transmembrane segments spans residues 173–193 (FLIV…NLVF), 271–291 (IVNL…IIVF), 306–326 (FLAL…DMFV), and 354–374 (VYIF…LLIF).

The protein belongs to the CemA family. PxcL subfamily.

Its subcellular location is the cell inner membrane. Together with PxcA, contributes to transient H(+) uptake following dark to light transition. Required for H(+) influx to activate the Calvin-Benson-Bassham cycle. May also be involved in CO(2) transport. This chain is PxcA-like protein, found in Synechocystis sp. (strain ATCC 27184 / PCC 6803 / Kazusa).